Reading from the N-terminus, the 245-residue chain is Octopine transport system permease protein OccM (245 aa).

5 helical membrane-spanning segments follow: residues 12-32, 57-77, 96-116, 163-183, and 199-219; these read FIALLAGIPLALKLAVFSIAV, FYIFAFRGTPLLVQIYIIYYG, AYWCALGALALNTAAYSAEIM, VLMVKSTSLASTITLMEITGI, and ACAGAIYLTMNFIAARLFALI. Residues 19–216 form the ABC transmembrane type-1 domain; sequence IPLALKLAVF…TMNFIAARLF (198 aa).

It belongs to the binding-protein-dependent transport system permease family. HisMQ subfamily.

The protein localises to the cell inner membrane. Its function is as follows. Component of the octopine active transport system probably consisting of four subunits: Q, M, P and T. This is Octopine transport system permease protein OccM (occM) from Rhizobium meliloti (Ensifer meliloti).